A 184-amino-acid polypeptide reads, in one-letter code: Guanylate kinase (184 aa).

Residues 4–182 (MGLTVLSGPS…AAARLVALMI (179 aa)) enclose the Guanylate kinase-like domain. ATP is bound at residue 11–18 (GPSGVGKD).

Belongs to the guanylate kinase family.

Its subcellular location is the cytoplasm. It carries out the reaction GMP + ATP = GDP + ADP. In terms of biological role, essential for recycling GMP and indirectly, cGMP. The protein is Guanylate kinase of Frankia casuarinae (strain DSM 45818 / CECT 9043 / HFP020203 / CcI3).